A 442-amino-acid chain; its full sequence is Circumsporozoite protein (442 aa).

Positions 1-18 (MMRKLAILSVSSFLFVEA) are cleaved as a signal peptide. The interval 69–357 (SRSLGENDDG…VKNNNNEEPS (289 aa)) is disordered. Over residues 81 to 94 (DNGNNNNGNNNNGD) the composition is skewed to low complexity. The span at 95–115 (NGREGKDEDKRDGNNEDNEKL) shows a compositional bias: basic and acidic residues. Positions 114–121 (KLRKPKHK) are required for the binding to heparan sulfate proteoglycans (HSPGs) on the surface of host hepatocytes. The segment at 122-126 (KLKQP) is region I; contains the proteolytic cleavage site. A compositionally biased stretch (low complexity) spans 130–318 (NPDPNANPNV…PNANPNANPN (189 aa)). Tandem repeats lie at residues 134 to 137 (NANP), 138 to 141 (NVDP), 142 to 145 (NANP), 146 to 149 (NVDP), 150 to 153 (NANP), 154 to 157 (NANP), 158 to 161 (NANP), 162 to 165 (NANP), 166 to 169 (NANP), 170 to 173 (NANP), 174 to 177 (NANP), 178 to 181 (NANP), 182 to 185 (NANP), 186 to 189 (NANP), 190 to 193 (NANP), 194 to 197 (NANP), 198 to 201 (NANP), 202 to 205 (NANP), 206 to 209 (NANP), 210 to 213 (NVDP), 214 to 217 (NANP), 218 to 221 (NANP), 222 to 225 (NANP), 226 to 229 (NANP), 230 to 233 (NANP), 234 to 237 (NANP), 238 to 241 (NANP), 242 to 245 (NANP), 246 to 249 (NANP), 250 to 253 (NANP), 254 to 257 (NANP), 258 to 261 (NANP), 262 to 265 (NANP), 266 to 269 (NANP), 270 to 273 (NANP), 274 to 277 (NANP), 278 to 281 (NANP), 282 to 285 (NANP), 286 to 289 (NANP), 290 to 293 (NANP), 294 to 297 (NANP), 298 to 301 (NANP), 302 to 305 (NANP), 306 to 309 (NANP), 310 to 313 (NANP), and 314 to 317 (NANP). The interval 134–317 (NANPNVDPNA…NPNANPNANP (184 aa)) is 46 X 4 AA tandem repeats of N-[AV]-[ND]-P. The span at 319 to 334 (KNNQGNGQGHNMPNDP) shows a compositional bias: polar residues. Residues 340 to 354 (ENANANNAVKNNNNE) are compositionally biased toward low complexity. In terms of domain architecture, TSP type-1 spans 367–420 (KIQNSLSTEWSPCSVTCGNGIQVRIKPGSADKPKDQLDYENDIEKKICKMEKCS). Cystine bridges form between cysteine 379/cysteine 414 and cysteine 383/cysteine 419. Threonine 382 is a glycosylation site (O-linked (Fuc) threonine). Cysteine 419 is lipidated: GPI-anchor amidated cysteine. Residues 420–442 (SSVFNVVNSSIGLIMVLSFLFLN) constitute a propeptide, removed in mature form.

It belongs to the plasmodium circumsporozoite protein family. During host cell invasion, proteolytically cleaved at the cell membrane in the region I by a papain-like cysteine protease of parasite origin. Cleavage is triggered by the sporozoite contact with highly sulfated heparan sulfate proteoglycans (HSPGs) present on the host hepatocyte cell surface. Cleavage exposes the TSP type-1 (TSR) domain and is required for productive invasion of host hepatocytes but not for adhesion to the host cell membrane. Cleavage is dispensable for sporozoite development in the oocyst, motility and for traversal of host and vector cells. Post-translationally, O-glycosylated; maybe by POFUT2.

Its subcellular location is the cell membrane. The protein localises to the cytoplasm. Its function is as follows. Essential sporozoite protein. In the mosquito vector, required for sporozoite development in the oocyst, migration through the vector hemolymph and entry into the vector salivary glands. In the vertebrate host, required for sporozoite migration through the host dermis and infection of host hepatocytes. Binds to highly sulfated heparan sulfate proteoglycans (HSPGs) on the surface of host hepatocytes. Functionally, in the vertebrate host, binds to highly sulfated heparan sulfate proteoglycans (HSPGs) on the surface of host hepatocytes and is required for sporozoite invasion of the host hepatocytes. This chain is Circumsporozoite protein, found in Plasmodium falciparum (isolate Wellcome).